The primary structure comprises 53 residues: UPF0391 membrane protein GFO_1615 (53 aa).

The next 2 membrane-spanning stretches (helical) occupy residues 4 to 24 (LIVIFLIIAIIAAIFGFGGVA) and 27 to 47 (AADIAKIIFYIFLVLLVISVL).

This sequence belongs to the UPF0391 family.

It is found in the cell membrane. This is UPF0391 membrane protein GFO_1615 from Christiangramia forsetii (strain DSM 17595 / CGMCC 1.15422 / KT0803) (Gramella forsetii).